Reading from the N-terminus, the 451-residue chain is Phenolic glucoside malonyltransferase 2 (451 aa).

Histidine 165 functions as the Proton acceptor in the catalytic mechanism. The HXXXD motif motif lies at 165-169 (HAVLD). Malonyl-CoA-binding positions include histidine 270 and 272–273 (ST). Catalysis depends on aspartate 395, which acts as the Proton acceptor. The DFGWG motif signature appears at 395–399 (DFGWG).

It belongs to the plant acyltransferase family. Phenolic glucoside malonyltransferase subfamily.

The enzyme catalyses a flavonol 7-O-beta-D-glucoside + malonyl-CoA = a flavonol 7-O-(6-O-malonyl-beta-D-glucoside) + CoA. Malonyltransferase acting on xenobiotic glucosides. Has activity toward 2-Naphthol glucoside (2NAG), 1-Naphthol glucoside (1NAG), kaempferol 7-O-glucoside, hydroxycoumarin glucosides and phenol-glucosides, but not toward kaempferol 3-O-glucoside or daidzin. Prefers phenol glucosides rather than naphtol glucosides. In vivo, seems to be involved in the malonylation of 4-methylumbelliferone glucoside or 4-nitrophenyl glucoside while PMAT1 would be involved in the malonylation of 2-Naphthol glucoside. This is Phenolic glucoside malonyltransferase 2 (PMAT2) from Arabidopsis thaliana (Mouse-ear cress).